The chain runs to 352 residues: uncharacterized protein (352 aa).

The next 8 helical transmembrane spans lie at F6–P26, F30–I50, I76–I96, E151–L171, F197–I217, V226–L246, W291–A311, and L330–F350.

The protein belongs to the CitM (TC 2.A.11) transporter family.

It localises to the cell membrane. This is an uncharacterized protein from Methanocaldococcus jannaschii (strain ATCC 43067 / DSM 2661 / JAL-1 / JCM 10045 / NBRC 100440) (Methanococcus jannaschii).